A 626-amino-acid polypeptide reads, in one-letter code: 1-deoxy-D-xylulose-5-phosphate synthase 2 (626 aa).

Thiamine diphosphate contacts are provided by residues His74 and Gly115–Ala117. Asp146 is a Mg(2+) binding site. Residues Gly147 to Ser148, Asn175, Phe286, and Glu368 each bind thiamine diphosphate. Asn175 lines the Mg(2+) pocket.

Belongs to the transketolase family. DXPS subfamily. Homodimer. The cofactor is Mg(2+). Thiamine diphosphate is required as a cofactor.

It carries out the reaction D-glyceraldehyde 3-phosphate + pyruvate + H(+) = 1-deoxy-D-xylulose 5-phosphate + CO2. Its pathway is metabolic intermediate biosynthesis; 1-deoxy-D-xylulose 5-phosphate biosynthesis; 1-deoxy-D-xylulose 5-phosphate from D-glyceraldehyde 3-phosphate and pyruvate: step 1/1. Functionally, catalyzes the acyloin condensation reaction between C atoms 2 and 3 of pyruvate and glyceraldehyde 3-phosphate to yield 1-deoxy-D-xylulose-5-phosphate (DXP). This Geobacter sulfurreducens (strain ATCC 51573 / DSM 12127 / PCA) protein is 1-deoxy-D-xylulose-5-phosphate synthase 2.